The primary structure comprises 167 residues: 6,7-dimethyl-8-ribityllumazine synthase (167 aa).

5-amino-6-(D-ribitylamino)uracil contacts are provided by residues F26, 60–62, and 89–91; these read AFE and AVI. Residue 94–95 coordinates (2S)-2-hydroxy-3-oxobutyl phosphate; it reads ET. The active-site Proton donor is H97. A 5-amino-6-(D-ribitylamino)uracil-binding site is contributed by F122. R136 serves as a coordination point for (2S)-2-hydroxy-3-oxobutyl phosphate.

Belongs to the DMRL synthase family. As to quaternary structure, forms an icosahedral capsid composed of 60 subunits, arranged as a dodecamer of pentamers.

The catalysed reaction is (2S)-2-hydroxy-3-oxobutyl phosphate + 5-amino-6-(D-ribitylamino)uracil = 6,7-dimethyl-8-(1-D-ribityl)lumazine + phosphate + 2 H2O + H(+). Its pathway is cofactor biosynthesis; riboflavin biosynthesis; riboflavin from 2-hydroxy-3-oxobutyl phosphate and 5-amino-6-(D-ribitylamino)uracil: step 1/2. Its function is as follows. Catalyzes the formation of 6,7-dimethyl-8-ribityllumazine by condensation of 5-amino-6-(D-ribitylamino)uracil with 3,4-dihydroxy-2-butanone 4-phosphate. This is the penultimate step in the biosynthesis of riboflavin. This is 6,7-dimethyl-8-ribityllumazine synthase from Vesicomyosocius okutanii subsp. Calyptogena okutanii (strain HA).